A 427-amino-acid chain; its full sequence is Putative transporter YdfJ (427 aa).

Over 1–7 (MDFQLYS) the chain is Cytoplasmic. Transmembrane regions (helical) follow at residues 8-28 (LGAALVFHEIFFPESSTAMAL) and 29-49 (ILAMGTYGAGYVARIVGAFIF). The Cytoplasmic portion of the chain corresponds to 50–74 (GKMGDRIGRKKVLFITITMMGICTT). A helical transmembrane segment spans residues 75-95 (LIGVLPTYAQIGVFAPILLVT). Over 96–97 (LR) the chain is Periplasmic. The chain crosses the membrane as a helical span at residues 98–118 (IIQGLGAGAEISGAGTMLAEY). Over 119 to 132 (APKGKRGIISSFVA) the chain is Cytoplasmic. A helical transmembrane segment spans residues 133 to 153 (MGTNCGTLSATAIWAFMFFIL). The Periplasmic segment spans residues 154-157 (SKEE). Residues 158–178 (LLAWGWRIPFLASVVVMVFAI) traverse the membrane as a helical segment. Residues 179 to 225 (WLRMNLKESPVFEKVNDSNQPTAKPAPAGSMFQSKSFWLATGLRFGQ) are Cytoplasmic-facing. The helical transmembrane segment at 226–246 (AGNSGLIQTFLAGYLVQTLLF) threads the bilayer. At 247–251 (NKAIP) the chain is on the periplasmic side. The chain crosses the membrane as a helical span at residues 252–272 (TDALMISSILGFMTIPFLGWL). The Cytoplasmic segment spans residues 273-279 (SDKIGRR). A helical transmembrane segment spans residues 280–300 (IPYIIMNTSAIVLAWPMLSII). Topologically, residues 301 to 307 (VDKSYAP) are periplasmic. Residues 308–328 (STIMVALIVIHNCAVLGLFAL) traverse the membrane as a helical segment. Residues 329–351 (ENITMAEMFGCKNRFTRMAISKE) are Cytoplasmic-facing. A helical membrane pass occupies residues 352–372 (IGGLIASGFGPILAGIFCTMT). Residue Glu-373 is a topological domain, periplasmic. Residues 374 to 394 (SWYPIAIMIMAYSVIGLISAL) traverse the membrane as a helical segment. The Cytoplasmic segment spans residues 395–427 (KMPEVKDRDLSALEDAAEDQPRVVRAAQPSRSL).

The protein belongs to the major facilitator superfamily. Metabolite:H+ Symporter (MHS) family (TC 2.A.1.6) family.

It is found in the cell inner membrane. Its function is as follows. When overexpressed in human HEK-293 cells forms an inward rectifying potassium channel. The protein is Putative transporter YdfJ (ydfJ) of Escherichia coli (strain K12).